The chain runs to 205 residues: Holliday junction branch migration complex subunit RuvA (205 aa).

The tract at residues 1–64 (MIGRLRGTLA…EDAHLLYGFH (64 aa)) is domain I. The tract at residues 65 to 143 (EKRERELFRE…AWETSPAMFT (79 aa)) is domain II. The flexible linker stretch occupies residues 144–153 (LVSDGPVPVS). The interval 154–205 (GASTAEADAVSALVSLGYKPQEASKAVSAIKDKAGLSSEELIRRSLKGMITK) is domain III.

Belongs to the RuvA family. In terms of assembly, homotetramer. Forms an RuvA(8)-RuvB(12)-Holliday junction (HJ) complex. HJ DNA is sandwiched between 2 RuvA tetramers; dsDNA enters through RuvA and exits via RuvB. An RuvB hexamer assembles on each DNA strand where it exits the tetramer. Each RuvB hexamer is contacted by two RuvA subunits (via domain III) on 2 adjacent RuvB subunits; this complex drives branch migration. In the full resolvosome a probable DNA-RuvA(4)-RuvB(12)-RuvC(2) complex forms which resolves the HJ.

It localises to the cytoplasm. Functionally, the RuvA-RuvB-RuvC complex processes Holliday junction (HJ) DNA during genetic recombination and DNA repair, while the RuvA-RuvB complex plays an important role in the rescue of blocked DNA replication forks via replication fork reversal (RFR). RuvA specifically binds to HJ cruciform DNA, conferring on it an open structure. The RuvB hexamer acts as an ATP-dependent pump, pulling dsDNA into and through the RuvAB complex. HJ branch migration allows RuvC to scan DNA until it finds its consensus sequence, where it cleaves and resolves the cruciform DNA. This is Holliday junction branch migration complex subunit RuvA from Pseudomonas putida (strain W619).